A 231-amino-acid chain; its full sequence is ATP phosphoribosyltransferase (231 aa).

This sequence belongs to the ATP phosphoribosyltransferase family. Short subfamily. As to quaternary structure, heteromultimer composed of HisG and HisZ subunits.

Its subcellular location is the cytoplasm. It catalyses the reaction 1-(5-phospho-beta-D-ribosyl)-ATP + diphosphate = 5-phospho-alpha-D-ribose 1-diphosphate + ATP. Its pathway is amino-acid biosynthesis; L-histidine biosynthesis; L-histidine from 5-phospho-alpha-D-ribose 1-diphosphate: step 1/9. Its function is as follows. Catalyzes the condensation of ATP and 5-phosphoribose 1-diphosphate to form N'-(5'-phosphoribosyl)-ATP (PR-ATP). Has a crucial role in the pathway because the rate of histidine biosynthesis seems to be controlled primarily by regulation of HisG enzymatic activity. This Brucella suis biovar 1 (strain 1330) protein is ATP phosphoribosyltransferase.